The primary structure comprises 420 residues: Pre-mRNA-splicing factor RBM22 (420 aa).

Ala2 is modified (N-acetylalanine). Phosphoserine is present on residues Ser4 and Ser102. Residues Lys139 and Lys149 each participate in a glycyl lysine isopeptide (Lys-Gly) (interchain with G-Cter in SUMO2) cross-link. Residues 159–186 (RNRPHICSFWVKGECKRGEECPYRHEKP) form a C3H1-type zinc finger. Lys212 is subject to N6-acetyllysine. An RRM domain is found at 232–305 (TTLYVGGLGD…RRLNVKWGRS (74 aa)). Lys290 participates in a covalent cross-link: Glycyl lysine isopeptide (Lys-Gly) (interchain with G-Cter in SUMO2). Disordered regions lie at residues 303-343 (GRSQ…AAEE) and 372-420 (APPP…HSSP). Residues 309–318 (RGKEKEKDGT) show a composition bias toward basic and acidic residues.

It belongs to the SLT11 family. As to quaternary structure, component of the pre-catalytic and catalytic spliceosome complexes. Component of the postcatalytic spliceosome P complex. Interacts with PDCD6; the interaction induces translocation of PDCD6 in the cytoplasm. Interacts with PPIL1.

Its subcellular location is the nucleus. The protein resides in the cytoplasm. In terms of biological role, required for pre-mRNA splicing as component of the activated spliceosome. Involved in the first step of pre-mRNA splicing. Binds directly to the internal stem-loop (ISL) domain of the U6 snRNA and to the pre-mRNA intron near the 5' splice site during the activation and catalytic phases of the spliceosome cycle. Involved in both translocations of the nuclear SLU7 to the cytoplasm and the cytosolic calcium-binding protein PDCD6 to the nucleus upon cellular stress responses. The chain is Pre-mRNA-splicing factor RBM22 (RBM22) from Bos taurus (Bovine).